Here is a 150-residue protein sequence, read N- to C-terminus: uncharacterized protein (150 aa).

The protein belongs to the Dps family.

This is an uncharacterized protein from Kitasatospora aureofaciens (Streptomyces aureofaciens).